We begin with the raw amino-acid sequence, 301 residues long: Protease HtpX (301 aa).

The next 2 membrane-spanning stretches (helical) occupy residues 4-24 (IGLF…ILSL) and 38-58 (LGNL…ISLL). His147 contacts Zn(2+). Glu148 is an active-site residue. Zn(2+) is bound at residue His151. 2 helical membrane passes run 155–175 (GDMV…MFFA) and 200–220 (FAIT…IVMW). A Zn(2+)-binding site is contributed by Glu226.

The protein belongs to the peptidase M48B family. It depends on Zn(2+) as a cofactor.

It localises to the cell inner membrane. This chain is Protease HtpX, found in Acinetobacter baylyi (strain ATCC 33305 / BD413 / ADP1).